The chain runs to 84 residues: UPF0457 protein BT9727_3043 (84 aa).

Belongs to the UPF0457 family.

The sequence is that of UPF0457 protein BT9727_3043 from Bacillus thuringiensis subsp. konkukian (strain 97-27).